The chain runs to 1314 residues: MALRPGAGSGGGGAAGAGAGSAGGGGFMFPVAGGIRPPQAGLMPMQQQGFPMVSVMQPNMQGIMGMNYSSQMSQGPIAMQAGIPMGPMPAAGMPYLGQAPFLGMRPPGPQYTPDMQKQFAEEQQKRFEQQQKLLEEERKRRQFEEQKQKLRLLSSVKPKTGEKSRDDALEAIKGNLDGFSRDAKMHPTPASHPKKPGPSLEEKFLVSCDISTSGQEQIKLNTSEVGHKALGPGSSKKYPSLMASNGVAVDGCVSGTTTAEAENTSDQNLSIEESGVGVFPSQDPAQPRMPPWIYNESLVPDAYKKILETTMTPTGIDTAKLYPILMSSGLPRETLGQIWALANRTTPGKLTKEELYTVLAMIAVTQRGVPAMSPDALNQFPAAPIPTLSGFSMTLPTPVSQPTVIPSGPAGSMPLSLGQPVMGINLVGPVGGAAAQASSGFIPTYPANQVVKPEEDDFQDFQDASKSGSLDDSFSDFQELPASSKTSNSQHGNSAPSLLMPLPGTKALPSMDKYAVFKGIAADKSSENTVPPGDPGDKYSAFRELEQTAENKPLGESFAEFRSAGTDDGFTDFKTADSVSPLEPPTKDKTFPPSFPSGTIQQKQQTQVKNPLNLADLDMFSSVNCSSEKPLSFSAVFSTSKSVSTPQSTGSAATMTALAATKTSSLADDFGEFSLFGEYSGLAPVGEQDDFADFMAFSNSSISSEQKPDDKYDALKEEASPVPLTSNVGSTVKGGQNSTAASTKYDVFRQLSLEGSGLGVEDLKDNTPSGKSDDDFADFHSSKFSSINSDKSLGEKAVAFRHTKEDSASVKSLDLPSIGGSSVGKEDSEDALSVQFDMKLADVGGDLKHVMSDSSLDLPTVSGQHPPAADIEDLKYAAFGSYSSNFAVSTLTSYDWSDRDDATQGRKLSPFVLSAGSGSPSATSILQKKETSFGSSENITMTSLSKVTTFVSEDALPETTFPALASFKDTIPQTSEQKEYENRDYKDFTKQDLPTAERSQEATCPSPASSGASQETPNECSDDFGEFQSEKPKISKFDFLVATSQSKMKSSEEMIKSELATFDLSVQGSHKRSLSLGDKEISRSSPSPALEQPFRDRSNTLNEKPALPVIRDKYKDLTGEVEENERYAYEWQRCLGSALNVIKKANDTLNGISSSSVCTEVIQSAQGMEYLLGVVEVYRVTKRVELGIKATAVCSEKLQQLLKDIDKVWNNLIGFMSLATLTPDENSLDFSSCMLRPGIKNAQELACGVCLLNVDSRSRKEEKPAEEHPKKAFNSETDSFKLAYGGHQYHASCANFWINCVEPKPPGLVLPDLL.

A coiled-coil region spans residues 115–155 (MQKQFAEEQQKRFEQQQKLLEEERKRRQFEEQKQKLRLLSS). The tract at residues 178–199 (GFSRDAKMHPTPASHPKKPGPS) is disordered. One can recognise an EH domain in the interval 295 to 388 (NESLVPDAYK…QFPAAPIPTL (94 aa)). The DFXDF motif 1 signature appears at 457–461 (DFQDF). The tract at residues 460–498 (DFQDASKSGSLDDSFSDFQELPASSKTSNSQHGNSAPSL) is disordered. Positions 462–496 (QDASKSGSLDDSFSDFQELPASSKTSNSQHGNSAP) are enriched in polar residues. Ser473 is subject to Phosphoserine. Residue Lys513 is modified to N6-acetyllysine. The tract at residues 518-786 (KGIAADKSSE…ADFHSSKFSS (269 aa)) is interaction with AP1G1. Ser580 is subject to Phosphoserine. The segment at 666–678 (LADDFGEFSLFGE) is interaction with AP1G1, AP1G2 and GGA1. The DFXDF motif 2 motif lies at 690-694 (DFADF). Ser720 carries the post-translational modification Phosphoserine. At Lys744 the chain carries N6-acetyllysine. Phosphoserine is present on residues Ser752 and Ser772. The DFXDF motif 3 motif lies at 775-779 (DFADF). Residues Ser812, Ser852, Ser855, Ser909, Ser919, and Ser935 each carry the phosphoserine modification. Disordered regions lie at residues 972–1026 (PQTS…DFGE) and 1073–1102 (SLSL…NTLN). Residues 976–990 (EQKEYENRDYKDFTK) show a composition bias toward basic and acidic residues. The span at 1001 to 1019 (EATCPSPASSGASQETPNE) shows a compositional bias: polar residues. Ser1006, Ser1073, Ser1075, Ser1087, and Ser1098 each carry phosphoserine. A Phosphothreonine modification is found at Thr1100.

In terms of assembly, self-associates. Interacts with GGA1 (via GAE domain). Interacts with GGA2 and GGA3. Interacts with AP1G1 (via GAE domain), a subunit of adapter protein complex AP-1. Interacts with AP1G2 (via GAE domain) a subunit of adapter protein complex AP-1. Component of the aftiphilin/p200/gamma-synergin complex, at least composed of AFTPH/aftiphilin, HEATR5B/p200a and SYNRG/gamma-synergin, which plays a role in the AP1G1/AP-1-mediated trafficking of transferrin from early to recycling endosomes. Within the complex interacts with AFTPH/aftiphilin and HEATR5B/p200a; the interactions are direct. Interacts (via EH domain) with SCAMP1.

Its subcellular location is the cytoplasm. It localises to the golgi apparatus. The protein resides in the trans-Golgi network membrane. The protein localises to the perinuclear region. It is found in the cytoplasmic vesicle. Its subcellular location is the clathrin-coated vesicle. In terms of biological role, plays a role in endocytosis and/or membrane trafficking at the trans-Golgi network (TGN). May act by linking the adapter protein complex AP-1 to other proteins. Component of clathrin-coated vesicles. Component of the aftiphilin/p200/gamma-synergin complex, which plays roles in AP1G1/AP-1-mediated protein trafficking including the trafficking of transferrin from early to recycling endosomes, and the membrane trafficking of furin and the lysosomal enzyme cathepsin D between the trans-Golgi network (TGN) and endosomes. This Homo sapiens (Human) protein is Synergin gamma.